Reading from the N-terminus, the 103-residue chain is Alpha-ketoglutarate dehydrogenase component 4 (103 aa).

An N-acetylmethionine modification is found at Met1. An N6-succinyllysine modification is found at Lys5. Residues 23-70 (IRFPDRRDNPKPNVSEVLRSAGLPSHTSSISQHSKGSKSPDWLMHQGP) form a disordered region. The span at 47–61 (SHTSSISQHSKGSKS) shows a compositional bias: low complexity. Residues Ser61 and Ser90 each carry the phosphoserine modification.

This sequence belongs to the alpha-ketoglutarate dehydrogenase component 4 family. As to quaternary structure, component of the 2-oxoglutarate dehydrogenase complex (OGDHC), composed of OGDH (2-oxoglutarate dehydrogenase; also called E1 subunit), DLST (dihydrolipoamide succinyltransferase; also called E2 subunit) and DLD (dihydrolipoamide dehydrogenase; also called E3 subunit), and the assembly factor KGD4. Within OGDHC complex, interacts (via N-terminus) with E3 subunit and (via C-terminus) with E2 subunit.

It localises to the mitochondrion. Its function is as follows. Molecular adapter that is necessary to form a stable 2-oxoglutarate dehydrogenase enzyme complex (OGDHC). Enables the specific recruitment of E3 subunit to E2 subunit in the 2-oxoglutarate dehydrogenase complex (OGDHC). In Bos taurus (Bovine), this protein is Alpha-ketoglutarate dehydrogenase component 4 (KGD4).